A 310-amino-acid chain; its full sequence is Glutaminase (310 aa).

Residues Ser-66, Asn-117, Glu-161, Asn-168, Tyr-192, Tyr-244, and Val-262 each coordinate substrate. Lys-294 carries the N6-acetyllysine modification.

This sequence belongs to the glutaminase family. Homotetramer.

The catalysed reaction is L-glutamine + H2O = L-glutamate + NH4(+). The polypeptide is Glutaminase (Escherichia coli O81 (strain ED1a)).